A 213-amino-acid chain; its full sequence is Mite allergen Der f 7 (213 aa).

Positions 1–17 (MMKFLLIAAVAFVAVSA) are cleaved as a signal peptide. Asn151 is a glycosylation site (N-linked (GlcNAc...) asparagine).

This sequence belongs to the mite group 7 allergen family.

It localises to the secreted. This is Mite allergen Der f 7 (DERF7) from Dermatophagoides farinae (American house dust mite).